The sequence spans 299 residues: MTHQPSPVIHHHFAPAKINLGLSVLGVRENGYHDLHSLMVPLTVGDELEIRPAGALTLRVEGADLPTDERNLVYRAARAYLDAAGAAGGADLVLHKRLPLASGLGGGSSDAASTLLALAELYPAPDHRPVDLPALALTLGADVPFFLLGGAALAEGVGERLTPVDDLPPVHLVLANAGAEVSAGDAYRWLDETGDFSGKLRLEAMRLALARGVEVPYFNSLQAGVLARVPSVLTTLEALADAGLHSVLMSGSGATCFGLAHDAAQAQAAAAALAQRCPGWWVTAAQVRLPLSDNSGGRT.

Lys17 is a catalytic residue. 99–109 (PLASGLGGGSS) is an ATP binding site. Asp142 is an active-site residue.

Belongs to the GHMP kinase family. IspE subfamily.

The catalysed reaction is 4-CDP-2-C-methyl-D-erythritol + ATP = 4-CDP-2-C-methyl-D-erythritol 2-phosphate + ADP + H(+). The protein operates within isoprenoid biosynthesis; isopentenyl diphosphate biosynthesis via DXP pathway; isopentenyl diphosphate from 1-deoxy-D-xylulose 5-phosphate: step 3/6. In terms of biological role, catalyzes the phosphorylation of the position 2 hydroxy group of 4-diphosphocytidyl-2C-methyl-D-erythritol. The polypeptide is 4-diphosphocytidyl-2-C-methyl-D-erythritol kinase (Deinococcus radiodurans (strain ATCC 13939 / DSM 20539 / JCM 16871 / CCUG 27074 / LMG 4051 / NBRC 15346 / NCIMB 9279 / VKM B-1422 / R1)).